The following is a 221-amino-acid chain: Transcriptional regulatory protein QseB (221 aa).

The Response regulatory domain maps to 2–116 (RILLIEDDNL…EVAARLQALI (115 aa)). Position 51 is a 4-aspartylphosphate (Asp-51). The ompR/PhoB-type DNA-binding region spans 124 to 218 (HSVIEQAGVK…VHGVGYALGQ (95 aa)).

Phosphorylated by QseC.

The protein resides in the cytoplasm. In terms of biological role, member of a two-component regulatory system QseB/QseC. This Haemophilus influenzae (strain ATCC 51907 / DSM 11121 / KW20 / Rd) protein is Transcriptional regulatory protein QseB (qseB).